The sequence spans 180 residues: Nucleoside triphosphate/diphosphate phosphatase (180 aa).

Arg-26 (proton donor) is an active-site residue. Residues Asn-90, Asp-106, Asp-108, Asp-110, Asp-123, and Glu-126 each coordinate Mg(2+).

It belongs to the Ntdp family. The cofactor is Mg(2+).

The catalysed reaction is a ribonucleoside 5'-triphosphate + H2O = a ribonucleoside 5'-diphosphate + phosphate + H(+). The enzyme catalyses a ribonucleoside 5'-diphosphate + H2O = a ribonucleoside 5'-phosphate + phosphate + H(+). Its function is as follows. Has nucleoside phosphatase activity towards nucleoside triphosphates and nucleoside diphosphates. This chain is Nucleoside triphosphate/diphosphate phosphatase, found in Staphylococcus aureus (strain Mu3 / ATCC 700698).